Here is a 606-residue protein sequence, read N- to C-terminus: MTSISALSFISTINVSSNSKISHSSVYPFLQKQHQSSKLRKPKRQVTCSSNNNQNNPKEEQELSNIVGHRRNVLIGLGGIYGTLATNPSALASPISPPDLSKCVPPSDLPSGTTPPNINCCPPYSTKITDFKFPSNQPLRVRQAAHLVDNEFLEKYKKATELMKALPSNDPRNFTQQANIHCAYCDGAYSQIGFPDLKLQVHGSWLFFPFHRWYLYFYERILGSLINDPTFALPFWNYDAPDGMQLPTIYADKASPLYDELRNASHQPPTLIDLNFCDIGSDIDRNELIKTNLSIMYRQVYSNGKTSRLFLGNPYRAGDAEPQGAGSIENVPHAPVHTWTGDNTQTNIEDMGIFYSAARDPIFYSHHSNVDRLWYIWKTLGGKKHDFTDKDWLESGFLFYDENKNLVRVNVKDSLDIDKLGYAYQDVPIPWEKAKPVPRRTKVQKLVEVEVNDGNLRKSPTIFLVRQQSPRKYVTFPLVLNNKVSAIVKRPKKLRSKKEKEEEEEVLVIEGIEFYMNIAIKFDVYINDEDDKVGAGNTEFAGSFVNIPHSAHGHKNKKIITSLRLGITDLLEDLHVEGDDNIVVTLVPKCGSGQVKINNVEIVFED.

The N-terminal 92 residues, 1 to 92, are a transit peptide targeting the chloroplast; it reads MTSISALSFI…TLATNPSALA (92 aa). The segment at 32-63 is disordered; sequence KQHQSSKLRKPKRQVTCSSNNNQNNPKEEQEL. Basic residues predominate over residues 35-44; sequence QSSKLRKPKR. Cystine bridges form between Cys-103-Cys-121 and Cys-120-Cys-182. The Cu cation site is built by His-181, His-202, His-211, His-333, His-337, and His-367. The segment at residues 185 to 202 is a cross-link (2'-(S-cysteinyl)-histidine (Cys-His)); the sequence is CDGAYSQIGFPDLKLQVH.

The protein belongs to the tyrosinase family. It depends on Cu(2+) as a cofactor.

Its subcellular location is the plastid. The protein localises to the chloroplast thylakoid lumen. It carries out the reaction 2 catechol + O2 = 2 1,2-benzoquinone + 2 H2O. Catalyzes the oxidation of mono- and o-diphenols to o-diquinones. The protein is Polyphenol oxidase A1, chloroplastic of Vicia faba (Broad bean).